We begin with the raw amino-acid sequence, 105 residues long: Replication restart protein PriB (105 aa).

Residues 1-102 (MTTNRLVLSG…LHAEQIELID (102 aa)) enclose the SSB domain.

The protein belongs to the PriB family. As to quaternary structure, homodimer. Interacts with PriA and DnaT. Component of the replication restart primosome. Primosome assembly occurs via a 'hand-off' mechanism. PriA binds to replication forks, subsequently PriB then DnaT bind; DnaT then displaces ssDNA to generate the helicase loading substrate.

Its function is as follows. Involved in the restart of stalled replication forks, which reloads the replicative helicase on sites other than the origin of replication; the PriA-PriB pathway is the major replication restart pathway. During primosome assembly it facilitates complex formation between PriA and DnaT on DNA; stabilizes PriA on DNA. Stimulates the DNA unwinding activity of PriA helicase. The polypeptide is Replication restart protein PriB (Photorhabdus laumondii subsp. laumondii (strain DSM 15139 / CIP 105565 / TT01) (Photorhabdus luminescens subsp. laumondii)).